We begin with the raw amino-acid sequence, 386 residues long: Protein salvador homolog 1 (386 aa).

Residues Ser95 and Ser137 each carry the phosphoserine modification. 2 WW domains span residues 200 to 233 and 235 to 268; these read LPLPPGWSVDWTMRGRKYYIDHNTNTTHWSHPLE and EGLPPGWERVESSEFGTYYVDHTNKRAQYRHPCA. Phosphothreonine is present on Thr211. The SARAH domain maps to 322–369; the sequence is ILKWELFQLADLDTYQGMLKLLFMKELEQIVKLYEAYRQALLTELENR. A coiled-coil region spans residues 345–374; sequence MKELEQIVKLYEAYRQALLTELENRKQRQQ.

In terms of assembly, homodimer. Stabilized through interaction with STK3/MST2 or STK4/MST1. Interacts (via SARAH domain) with isoform 1 of NEK2. Interacts with ESR1 only in the presence of STK3/MST2. Interacts with WTIP and AJUBA. Phosphorylated by STK3/MST2 and STK4/MST1. Phosphorylation is not required for SAV1 stability and may increase the number of protein binding sites on the scaffold molecule. As to expression, ubiquitously expressed in adult tissues with the highest level found in testis.

Its subcellular location is the nucleus. It localises to the cytoplasm. Regulator of STK3/MST2 and STK4/MST1 in the Hippo signaling pathway which plays a pivotal role in organ size control and tumor suppression by restricting proliferation and promoting apoptosis. The core of this pathway is composed of a kinase cascade wherein STK3/MST2 and STK4/MST1, in complex with its regulatory protein SAV1, phosphorylates and activates LATS1/2 in complex with its regulatory protein MOB1, which in turn phosphorylates and inactivates YAP1 oncoprotein and WWTR1/TAZ. Phosphorylation of YAP1 by LATS1/2 inhibits its translocation into the nucleus to regulate cellular genes important for cell proliferation, cell death, and cell migration. SAV1 is required for STK3/MST2 and STK4/MST1 activation and promotes cell-cycle exit and terminal differentiation in developing epithelial tissues. Plays a role in centrosome disjunction by regulating the localization of NEK2 to centrosomes, and its ability to phosphorylate CROCC and CEP250. In conjunction with STK3/MST2, activates the transcriptional activity of ESR1 through the modulation of its phosphorylation. This is Protein salvador homolog 1 (Sav1) from Mus musculus (Mouse).